Consider the following 2123-residue polypeptide: Bromodomain adjacent to zinc finger domain protein 2B (2123 aa).

Disordered stretches follow at residues 1–129 (MESG…VNGT), 144–306 (TPAS…LSQQ), 357–402 (PSPD…EMGK), 473–534 (NENV…HPHP), 546–691 (RGTD…RRVA), 756–793 (RAMD…GSAE), and 937–960 (ARKK…LNKE). Residues 7 to 46 (LPSSPASSTTPTSSSAPSVASAVSKSSLSTGAASLSSTAS) show a composition bias toward low complexity. Over residues 83-95 (FFPPLLGIPPLFA) the composition is skewed to pro residues. Positions 100-116 (NHDSSFHSRTSGKSSRN) are enriched in polar residues. 2 stretches are compositionally biased toward low complexity: residues 147 to 157 (SSSMGQNQSTS) and 193 to 216 (ESSS…ISSS). The segment covering 217 to 243 (DSDDLEEEEEEDQSVEESEDDDSDSET) has biased composition (acidic residues). Residues 259-277 (SDPKTDGQKATEKAQERRT) are compositionally biased toward basic and acidic residues. Composition is skewed to low complexity over residues 291-306 (PPFQ…LSQQ) and 366-379 (NKNT…LTSE). Residues 473-502 (NENVSSSTPFSSPVNLSTSGRRAPGSQTPA) are compositionally biased toward polar residues. Basic and acidic residues predominate over residues 546–559 (RGTDSDVPSSKDSE). Positions 560–587 (DSNEDEEEDDEEEDEEDDEDDESDDSQS) are enriched in acidic residues. Low complexity predominate over residues 588–597 (ESDSNSQSDS). The span at 598 to 615 (EGSEDDEEKDQEESDSDT) shows a compositional bias: acidic residues. 2 stretches are compositionally biased toward low complexity: residues 628–637 (SSSAKSPPSS) and 671–683 (TSSS…PHSG). Residues 690 to 765 (VADDQELRIP…RAMDGRRGRP (76 aa)) enclose the MBD domain. A compositionally biased stretch (basic and acidic residues) spans 756–778 (RAMDGRRGRPPNPDRPRAREESR). Positions 1004 to 1069 (GTTFSDCLMV…LSAAVCDPGL (66 aa)) constitute a DDT domain. Disordered stretches follow at residues 1183–1260 (RDAS…QTAS), 1396–1444 (PPES…KTDA), 1499–1526 (TLVT…SSVQ), and 1588–1614 (FLTS…AQPV). The span at 1214–1238 (SDYDDDDDDDSDDQADEDEEDEEDK) shows a compositional bias: acidic residues. Residues 1239 to 1248 (DDKKGKKTDI) are compositionally biased toward basic and acidic residues. A coiled-coil region spans residues 1254-1281 (EGDQTASVEELEKQIEKLSKQQSQYRRK). 2 stretches are compositionally biased toward polar residues: residues 1408 to 1422 (NVST…QNSG) and 1430 to 1444 (PSAT…KTDA). The segment covering 1505–1515 (SQPPSKSPSPA) has biased composition (pro residues). Low complexity predominate over residues 1588 to 1600 (FLTSSVASSKSDS). Residues 1886-1936 (KVYCQICRKGDNEELLLLCDGCDKGCHTYCHRPKITTIPDGDWFCPACISK) form a PHD-type zinc finger. The interval 1949–2013 (VKGKKTNDSK…AESTTSIKKP (65 aa)) is disordered. Residues 1984-1995 (GSKELKKRKMEE) are compositionally biased toward basic and acidic residues. Residues 1996–2010 (TTSLNLSKAESTTSI) show a composition bias toward polar residues. Residues 2015–2119 (KDESRDLALC…KYFEKKWTDT (105 aa)) form the Bromo domain.

Belongs to the WAL family. Component of the BRF-1 ISWI chromatin remodeling complex, at least composed of SMARCA1 and BAZ2B, which regulates the spacing of histone octamers on the DNA template to facilitate access to DNA. Within the BRF-1 ISWI chromatin remodeling complex interacts with SMARCA1; the interaction is direct. Component of the BRF-5 ISWI chromatin remodeling complex, at least composed of SMARCA5/SNF2H and BAZ2B, which regulates the spacing of histone octamers on the DNA template to facilitate access to DNA. Within the BRF-5 ISWI chromatin remodeling complex interacts with SMARCA5/SNF2H; the interaction is direct. Interacts with acetylated lysine residues on histone H1.4, H2A, H2B, H3 and H4 (in vitro). Interacts with EHMT1.

The protein resides in the nucleus. Regulatory subunit of the ATP-dependent BRF-1 and BRF-5 ISWI chromatin remodeling complexes, which form ordered nucleosome arrays on chromatin and facilitate access to DNA during DNA-templated processes such as DNA replication, transcription, and repair. Both complexes regulate the spacing of nucleosomes along the chromatin and have the ability to slide mononucleosomes to the center of a DNA template. The BRF-1 ISWI chromatin remodeling complex has a lower ATP hydrolysis rate than the BRF-5 ISWI chromatin remodeling complex. Chromatin reader protein, involved in positively modulating the rate of age-related behavioral deterioration. Represses the expression of mitochondrial function-related genes, perhaps by occupying their promoter regions, working in concert with histone methyltransferase EHMT1. The chain is Bromodomain adjacent to zinc finger domain protein 2B from Mus musculus (Mouse).